A 345-amino-acid chain; its full sequence is D-fructose 1,6-bisphosphatase class 2/sedoheptulose 1,7-bisphosphatase (345 aa).

Mn(2+) is bound by residues D33, E57, D97, and E100. Residues 100 to 102, Y131, 176 to 178, and 198 to 200 contribute to the substrate site; these read EGT, RPR, and DGD. E225 contributes to the Mn(2+) binding site.

The protein belongs to the FBPase class 2 family. In terms of assembly, homotetramer. The cofactor is Mn(2+).

The catalysed reaction is beta-D-fructose 1,6-bisphosphate + H2O = beta-D-fructose 6-phosphate + phosphate. The enzyme catalyses D-sedoheptulose 1,7-bisphosphate + H2O = D-sedoheptulose 7-phosphate + phosphate. It functions in the pathway carbohydrate biosynthesis; Calvin cycle. Functionally, catalyzes the hydrolysis of fructose 1,6-bisphosphate (Fru 1,6-P2) and sedoheptulose 1,7-bisphosphate (Sed 1,7-P2) to fructose 6-phosphate and sedoheptulose 7-phosphate, respectively. This Crocosphaera subtropica (strain ATCC 51142 / BH68) (Cyanothece sp. (strain ATCC 51142)) protein is D-fructose 1,6-bisphosphatase class 2/sedoheptulose 1,7-bisphosphatase.